The sequence spans 882 residues: Alanine--tRNA ligase (882 aa).

Zn(2+) contacts are provided by His-576, His-580, Cys-678, and His-682.

The protein belongs to the class-II aminoacyl-tRNA synthetase family. The cofactor is Zn(2+).

It is found in the cytoplasm. It catalyses the reaction tRNA(Ala) + L-alanine + ATP = L-alanyl-tRNA(Ala) + AMP + diphosphate. In terms of biological role, catalyzes the attachment of alanine to tRNA(Ala) in a two-step reaction: alanine is first activated by ATP to form Ala-AMP and then transferred to the acceptor end of tRNA(Ala). Also edits incorrectly charged Ser-tRNA(Ala) and Gly-tRNA(Ala) via its editing domain. The sequence is that of Alanine--tRNA ligase from Anaplasma marginale (strain St. Maries).